The following is a 158-amino-acid chain: Peroxidase (158 aa).

Pro-2 provides a ligand contact to substrate. His-32 is a heme b binding site. A Ca(2+)-binding site is contributed by Thr-33. An intrachain disulfide couples Cys-39 to Cys-64. An N-linked (GlcNAc...) asparagine glycan is attached at Asn-48. Ca(2+) contacts are provided by Asp-78, Thr-81, and Asp-86.

It belongs to the peroxidase family. Classical plant (class III) peroxidase subfamily. The cofactor is Ca(2+). Heme b is required as a cofactor.

The catalysed reaction is 2 a phenolic donor + H2O2 = 2 a phenolic radical donor + 2 H2O. Functionally, removal of H(2)O(2), oxidation of toxic reductants, biosynthesis and degradation of lignin, suberization, auxin catabolism, response to environmental stresses such as wounding, pathogen attack and oxidative stress. These functions might be dependent on each isozyme/isoform in each plant tissue. The sequence is that of Peroxidase from Lupinus polyphyllus (Large-leaved lupine).